Reading from the N-terminus, the 137-residue chain is Aspartate 1-decarboxylase (137 aa).

Catalysis depends on Ser25, which acts as the Schiff-base intermediate with substrate; via pyruvic acid. Ser25 is subject to Pyruvic acid (Ser). Thr57 is a substrate binding site. The active-site Proton donor is Tyr58. Residue 73 to 75 (GAA) coordinates substrate.

It belongs to the PanD family. Heterooctamer of four alpha and four beta subunits. Requires pyruvate as cofactor. In terms of processing, is synthesized initially as an inactive proenzyme, which is activated by self-cleavage at a specific serine bond to produce a beta-subunit with a hydroxyl group at its C-terminus and an alpha-subunit with a pyruvoyl group at its N-terminus.

It is found in the cytoplasm. It carries out the reaction L-aspartate + H(+) = beta-alanine + CO2. It functions in the pathway cofactor biosynthesis; (R)-pantothenate biosynthesis; beta-alanine from L-aspartate: step 1/1. Functionally, catalyzes the pyruvoyl-dependent decarboxylation of aspartate to produce beta-alanine. This Thermobifida fusca (strain YX) protein is Aspartate 1-decarboxylase.